The chain runs to 205 residues: ESCRT-related protein CHMP1 (205 aa).

Coiled-coil stretches lie at residues 13-51 (DLKF…MDGA) and 109-140 (GNLQ…GAMA).

This sequence belongs to the SNF7 family.

It is found in the cytoplasm. Its subcellular location is the endosome membrane. In terms of biological role, involved in ESCRT-dependent multivesicular body (MVB) formation and sorting of endosomal cargo proteins into MVBs. The sequence is that of ESCRT-related protein CHMP1 from Oryza sativa subsp. japonica (Rice).